A 448-amino-acid chain; its full sequence is Divalent metal cation transporter MntH (448 aa).

11 consecutive transmembrane segments (helical) span residues 41-61 (LFAF…PGNW), 69-89 (SEFG…AVLL), 117-137 (GFVL…AEVI), 147-167 (FGIP…LVLF), 176-196 (IEVI…AEMV), 215-235 (IVTN…TVMP), 270-290 (FSLT…AAAF), 307-327 (LLNP…ALLA), 363-383 (VLAI…GINE), 384-404 (LLIF…IPLV), and 424-444 (IVSW…LFYT).

The protein belongs to the NRAMP family.

The protein resides in the cell membrane. Its function is as follows. H(+)-stimulated, divalent metal cation uptake system. The chain is Divalent metal cation transporter MntH from Listeria innocua serovar 6a (strain ATCC BAA-680 / CLIP 11262).